Here is a 381-residue protein sequence, read N- to C-terminus: 3-dehydroquinate synthase (381 aa).

NAD(+) is bound by residues 81-86 (EGEVSK), 115-119 (GVVGD), 139-140 (TS), lysine 152, and lysine 161. Zn(2+) contacts are provided by glutamate 194, histidine 256, and histidine 274.

The protein belongs to the sugar phosphate cyclases superfamily. Dehydroquinate synthase family. It depends on Co(2+) as a cofactor. Zn(2+) is required as a cofactor. NAD(+) serves as cofactor.

It localises to the cytoplasm. The enzyme catalyses 7-phospho-2-dehydro-3-deoxy-D-arabino-heptonate = 3-dehydroquinate + phosphate. Its pathway is metabolic intermediate biosynthesis; chorismate biosynthesis; chorismate from D-erythrose 4-phosphate and phosphoenolpyruvate: step 2/7. Catalyzes the conversion of 3-deoxy-D-arabino-heptulosonate 7-phosphate (DAHP) to dehydroquinate (DHQ). The sequence is that of 3-dehydroquinate synthase from Rhodopseudomonas palustris (strain BisA53).